The primary structure comprises 349 residues: uncharacterized protein (349 aa).

A signal peptide spans 1 to 16 (MLFKISFLALIASALA). The Lumenal segment spans residues 17–326 (MSINSPTNGD…SSSSSSSAAS (310 aa)). Disordered regions lie at residues 115–190 (ASSS…SSYR) and 243–322 (TNGT…SSSS). Low complexity-rich tracts occupy residues 116-176 (SSSS…SSRT), 243-278 (TNGT…TASG), and 289-322 (STND…SSSS). A helical transmembrane segment spans residues 327 to 347 (LVSQPVGISAVIAFFAVALSL). Over 348-349 (TL) the chain is Cytoplasmic.

It is found in the endoplasmic reticulum membrane. This is an uncharacterized protein from Schizosaccharomyces pombe (strain 972 / ATCC 24843) (Fission yeast).